A 126-amino-acid polypeptide reads, in one-letter code: Glycine cleavage system H protein (126 aa).

One can recognise a Lipoyl-binding domain in the interval 21–103; the sequence is TVTVGISNHA…YEGGWIARIK (83 aa). Lys-62 carries the post-translational modification N6-lipoyllysine.

It belongs to the GcvH family. As to quaternary structure, the glycine cleavage system is composed of four proteins: P, T, L and H. The cofactor is (R)-lipoate.

The glycine cleavage system catalyzes the degradation of glycine. The H protein shuttles the methylamine group of glycine from the P protein to the T protein. In Aliivibrio salmonicida (strain LFI1238) (Vibrio salmonicida (strain LFI1238)), this protein is Glycine cleavage system H protein.